The sequence spans 571 residues: 5' exonuclease Apollo (571 aa).

2 disordered regions span residues 346–386 and 431–487; these read TSRP…TDRN and MDDN…SMHD. Composition is skewed to basic and acidic residues over residues 367–386 and 453–468; these read NHDD…TDRN and ECDH…EKSP. The segment covering 470–487 has biased composition (polar residues); sequence MGSTNSGEMCSSMDSMHD. The TBM signature appears at 501–532; it reads NPQSVTSAIPITLESEQFEHWLLENFTIPAEE.

This sequence belongs to the DNA repair metallo-beta-lactamase (DRMBL) family. Interacts with terf2; the interaction is direct.

Its subcellular location is the chromosome. The protein resides in the telomere. The protein localises to the nucleus. It catalyses the reaction a beta-lactam + H2O = a substituted beta-amino acid. Functionally, 5'-3' exonuclease that plays a central role in telomere maintenance and protection during S-phase. Participates in the protection of telomeres against non-homologous end-joining (NHEJ)-mediated repair, thereby ensuring that telomeres do not fuse. Plays a key role in telomeric loop (T loop) formation by being recruited by terf2 at the leading end telomeres and by processing leading-end telomeres immediately after their replication via its exonuclease activity: generates 3' single-stranded overhang at the leading end telomeres avoiding blunt leading-end telomeres that are vulnerable to end-joining reactions and expose the telomere end in a manner that activates the DNA repair pathways. Possesses beta-lactamase activity, catalyzing the hydrolysis of penicillin G and nitrocefin. Exhibits no activity towards other beta-lactam antibiotic classes including cephalosporins (cefotaxime) and carbapenems (imipenem). The polypeptide is 5' exonuclease Apollo (dclre1b) (Danio rerio (Zebrafish)).